An 813-amino-acid chain; its full sequence is Leucine--tRNA ligase (813 aa).

A 'HIGH' region motif is present at residues 41–51 (PYPSGTLHMGH). Residues 575 to 579 (KMSKS) carry the 'KMSKS' region motif. Lys578 serves as a coordination point for ATP.

This sequence belongs to the class-I aminoacyl-tRNA synthetase family.

The protein resides in the cytoplasm. The catalysed reaction is tRNA(Leu) + L-leucine + ATP = L-leucyl-tRNA(Leu) + AMP + diphosphate. In Francisella tularensis subsp. holarctica (strain FTNF002-00 / FTA), this protein is Leucine--tRNA ligase.